A 426-amino-acid chain; its full sequence is Casein kinase I (426 aa).

Residues 9–278 enclose the Protein kinase domain; sequence YRISRKIGGG…LRKLLREMFV (270 aa). ATP-binding positions include 15-23 and lysine 38; that span reads IGGGSFGEI. Aspartate 128 (proton acceptor) is an active-site residue. Disordered regions lie at residues 340–360 and 377–426; these read TTTT…TVSN and PSYN…PPAK. A compositionally biased stretch (polar residues) spans 345–360; that stretch reads SSSQPSNVKNISTVSN. The segment covering 386–404 has biased composition (low complexity); the sequence is QSPQQTTTTTSSSNPNQTT. The span at 414–426 shows a compositional bias: polar residues; the sequence is PQSSSTTTKPPAK.

It belongs to the protein kinase superfamily. CK1 Ser/Thr protein kinase family. Casein kinase I subfamily. In terms of assembly, monomer. In terms of processing, autophosphorylated.

The protein resides in the cytoplasm. It localises to the nucleus. The enzyme catalyses L-seryl-[protein] + ATP = O-phospho-L-seryl-[protein] + ADP + H(+). The catalysed reaction is L-threonyl-[protein] + ATP = O-phospho-L-threonyl-[protein] + ADP + H(+). Casein kinases are operationally defined by their preferential utilization of acidic proteins such as caseins as substrates. Can phosphorylate a large number of proteins. May have a role in DNA repair mechanism and support vegetative growth of the cells. This Dictyostelium discoideum (Social amoeba) protein is Casein kinase I (cak1-1).